Consider the following 418-residue polypeptide: MASSGLAVAATASSAWLCCPNHHIHTSSSRSRKHLLLHGLYGSAPARTRGRRPPVWTAAAATAAAPADTAASARREQVEIARSLNAWVEENMLPLLTPVDSAWQPHDFLPCSAAGGGEALAAFTEGVAELRAGAAGVPDEVLVCLVGNMVTEEALPTYQSMGNRAEGLADGTGVSPLPWARWLRGWTAEENRHGDLLNRYLYLSGRVDMRQVEATVHRLLRNGMEMLAPASPYHGLIYGAFQERATFISHGHTARLAGQHGDRALAKICGVIAADERRHEAGYTMASGRLFELDPDGMARALADVMRGKVTMPGQLMSDGRDGDGEHSLFARFSAVAERAGVYTARDYGDLVEHFVRRWRVAELAAGLSGEGRRAQEYLCGLAPKIRRMEELAHRRAARIEPAMARFSWIFDRPVMLG.

The N-terminal 70 residues, 1 to 70 (MASSGLAVAA…ATAAAPADTA (70 aa)), are a transit peptide targeting the chloroplast. Fe cation is bound by residues E152, E190, H193, E243, E276, and H279.

It belongs to the fatty acid desaturase type 2 family. Homodimer. Requires Fe(2+) as cofactor.

It localises to the plastid. Its subcellular location is the chloroplast. It functions in the pathway lipid metabolism; fatty acid metabolism. Its function is as follows. Introduces a cis double bond in the acyl chain of an acyl-[acyl-carrier protein]. The polypeptide is Acyl-[acyl-carrier-protein] desaturase 4, chloroplastic (Oryza sativa subsp. japonica (Rice)).